The chain runs to 200 residues: 3-isopropylmalate dehydratase small subunit (200 aa).

This sequence belongs to the LeuD family. LeuD type 1 subfamily. Heterodimer of LeuC and LeuD.

It catalyses the reaction (2R,3S)-3-isopropylmalate = (2S)-2-isopropylmalate. It functions in the pathway amino-acid biosynthesis; L-leucine biosynthesis; L-leucine from 3-methyl-2-oxobutanoate: step 2/4. Catalyzes the isomerization between 2-isopropylmalate and 3-isopropylmalate, via the formation of 2-isopropylmaleate. The chain is 3-isopropylmalate dehydratase small subunit from Aliivibrio fischeri (strain ATCC 700601 / ES114) (Vibrio fischeri).